The following is a 98-amino-acid chain: Small ribosomal subunit protein bS20 (98 aa).

Positions 1–15 are enriched in basic residues; it reads MAPKKTTKKGGPKKR. The tract at residues 1-21 is disordered; it reads MAPKKTTKKGGPKKRPSAEKR.

This sequence belongs to the bacterial ribosomal protein bS20 family.

Binds directly to 16S ribosomal RNA. In Chlamydia abortus (strain DSM 27085 / S26/3) (Chlamydophila abortus), this protein is Small ribosomal subunit protein bS20.